Consider the following 554-residue polypeptide: 3-(3-hydroxy-phenyl)propionate/3-hydroxycinnamic acid hydroxylase (554 aa).

FAD contacts are provided by residues 17-46 (QVAIVGAGPVGLMMANYLGQMGISVLVVEK) and 285-295 (FRINRVLLAGD).

The protein belongs to the PheA/TfdB FAD monooxygenase family. It depends on FAD as a cofactor.

It catalyses the reaction 3-(3-hydroxyphenyl)propanoate + NADH + O2 + H(+) = 3-(2,3-dihydroxyphenyl)propanoate + NAD(+) + H2O. It carries out the reaction (2E)-3-(3-hydroxyphenyl)prop-2-enoate + NADH + O2 + H(+) = (2E)-3-(2,3-dihydroxyphenyl)prop-2-enoate + NAD(+) + H2O. It participates in aromatic compound metabolism; 3-phenylpropanoate degradation. Catalyzes the insertion of one atom of molecular oxygen into position 2 of the phenyl ring of 3-(3-hydroxyphenyl)propionate (3-HPP) and hydroxycinnamic acid (3HCI). This Klebsiella pneumoniae subsp. pneumoniae (strain ATCC 700721 / MGH 78578) protein is 3-(3-hydroxy-phenyl)propionate/3-hydroxycinnamic acid hydroxylase.